The chain runs to 297 residues: Octopine catabolism/uptake operon regulatory protein OccR (297 aa).

The region spanning 1 to 58 (MNLRQVEAFRAVMLTGQMTAAAELMLVTQPAISRLIKDFERATKLQLFERRGNHIIPT) is the HTH lysR-type domain. The segment at residues 18-37 (MTAAAELMLVTQPAISRLIK) is a DNA-binding region (H-T-H motif).

Belongs to the LysR transcriptional regulatory family.

Positive regulatory protein for the occ operon involved in octopine catabolism and uptake. Also acts as a negative regulator of its expression. The chain is Octopine catabolism/uptake operon regulatory protein OccR (occR) from Rhizobium meliloti (Ensifer meliloti).